We begin with the raw amino-acid sequence, 458 residues long: Transcription factor Atf1 (458 aa).

Residues 347–410 (EEKRRNFLER…VNLKTLLLAH (64 aa)) form the bZIP domain. The basic motif stretch occupies residues 349–378 (KRRNFLERNRVAALKCRQRKKQWLANLQNK). The tract at residues 389–403 (LTATVTQLREEIVNL) is leucine-zipper.

It belongs to the bZIP family.

It localises to the nucleus. Its function is as follows. Transcription factor that positively regulates vegetative growth, reproduction, and osmotic stress response. This chain is Transcription factor Atf1, found in Penicillium expansum (Blue mold rot fungus).